A 508-amino-acid chain; its full sequence is Histidine--tRNA ligase, cytoplasmic (508 aa).

Positions 3–59 (SPALEELVLNSRHRLVRGLKQQKASADQIEEEVAKLLKLKAQLGHDESKQKFVLKTP) constitute a WHEP-TRS domain. S66 is subject to Phosphoserine. Residues 130-132 (DLT), R157, D177, R326, and 330-331 (YY) contribute to the L-histidine site.

The protein belongs to the class-II aminoacyl-tRNA synthetase family. Homodimer.

It localises to the cytoplasm. It carries out the reaction tRNA(His) + L-histidine + ATP = L-histidyl-tRNA(His) + AMP + diphosphate + H(+). Its function is as follows. Catalyzes the ATP-dependent ligation of histidine to the 3'-end of its cognate tRNA, via the formation of an aminoacyl-adenylate intermediate (His-AMP). Plays a role in axon guidance. The protein is Histidine--tRNA ligase, cytoplasmic (HARS1) of Mesocricetus auratus (Golden hamster).